The sequence spans 177 residues: RNA pyrophosphohydrolase (177 aa).

The region spanning 6–149 (GYRPNVGIVI…KRDVYRRVMK (144 aa)) is the Nudix hydrolase domain. A Nudix box motif is present at residues 38–59 (GGINPGESPEQAMYRELFEEVG).

The protein belongs to the Nudix hydrolase family. RppH subfamily. The cofactor is a divalent metal cation.

Functionally, accelerates the degradation of transcripts by removing pyrophosphate from the 5'-end of triphosphorylated RNA, leading to a more labile monophosphorylated state that can stimulate subsequent ribonuclease cleavage. The chain is RNA pyrophosphohydrolase from Pectobacterium atrosepticum (strain SCRI 1043 / ATCC BAA-672) (Erwinia carotovora subsp. atroseptica).